Consider the following 290-residue polypeptide: MVLLHVKRGDESQFLLQAPGSTELEELTVQVARVYNGRLKVQRLCSEMEELAEHGIFLPPNMQGLTDDQIEELKLKDEWGEKCVPSGGAVFKKDDIGRRNGQAPNEKMKQVLKKTIEEAKAIISKKQVEAGVCVTMEMVKDALDQLRGAVMIVYPMGLPPYDPIRMEFENKEDLSGTQAGLNVIKEAEAQLWWAAKELRRTKKLSDYVGKNEKTKIIAKIQQRGQGAPAREPIISSEEQKQLMLYYHRRQEELKRLEENDDDAYLNSPWADNTALKRHFHGVKDIKWRPR.

The residue at position 264 (Tyr-264) is a Phosphotyrosine.

Belongs to the CFAP298 family. In terms of assembly, interacts with ZMYND10.

The protein localises to the cytoplasm. It is found in the cytoskeleton. It localises to the cilium basal body. Its function is as follows. Plays a role in motile cilium function, possibly by acting on outer dynein arm assembly. Seems to be important for initiation rather than maintenance of cilium motility. Required for correct positioning of the cilium at the apical cell surface, suggesting an additional role in the planar cell polarity (PCP) pathway. May suppress canonical Wnt signaling activity. This Homo sapiens (Human) protein is Cilia- and flagella-associated protein 298.